The sequence spans 461 residues: Mannose-6-phosphate isomerase (461 aa).

Zn(2+)-binding residues include Q107, H109, E134, and H291. The active site involves R310.

The protein belongs to the mannose-6-phosphate isomerase type 1 family. Requires Zn(2+) as cofactor.

It localises to the cytoplasm. The enzyme catalyses D-mannose 6-phosphate = D-fructose 6-phosphate. It functions in the pathway nucleotide-sugar biosynthesis; GDP-alpha-D-mannose biosynthesis; alpha-D-mannose 1-phosphate from D-fructose 6-phosphate: step 1/2. Functionally, involved in the synthesis of the GDP-mannose and dolichol-phosphate-mannose required for a number of critical mannosyl transfer reactions. This is Mannose-6-phosphate isomerase (manA) from Emericella nidulans (strain FGSC A4 / ATCC 38163 / CBS 112.46 / NRRL 194 / M139) (Aspergillus nidulans).